Reading from the N-terminus, the 338-residue chain is Nucleoid-associated protein CGSHiGG_07705 (338 aa).

This sequence belongs to the YejK family.

Its subcellular location is the cytoplasm. It localises to the nucleoid. This is Nucleoid-associated protein CGSHiGG_07705 from Haemophilus influenzae (strain PittGG).